Here is a 377-residue protein sequence, read N- to C-terminus: MIPMTIVQKMILMEIVQKMILITIIQKMNQIANYTMKKIINAPGIIKLTKKEKIKDNDGNIIEIEVRGTRDPENIFFRVSDVINGFDMPKLYDTITRNNSGYRQNIHYRYFNFKKTTKKGYCMKLFLTFIGMEKVINCSRSIHIQNAMIARKWLSQFSASIKFNSLVLDSSKSSTSNIGYVYCITSEKIDANKIGYWKGTRKDLICRYKTYYGDYVELFCVKTMYPELLEKKCHQHFINYKLSHELYDKSNTDKYKLYLKENKITPTEQDIYEDQQITKTDVKTLFTTHLTTQDQKNKLSSKLMGIPTNIISVDKIKELENEIKELKYQNEIKELKYQNEIKELKYQNEINELKYKNIILEKDLEISNLNKKLKKKN.

Residues 309 to 375 (NIISVDKIKE…ISNLNKKLKK (67 aa)) are a coiled coil.

This sequence belongs to the mimivirus L5 family.

This is an uncharacterized protein from Acanthamoeba polyphaga (Amoeba).